A 45-amino-acid chain; its full sequence is Rubredoxin-1 (45 aa).

At M1 the chain carries N-formylmethionine. The 45-residue stretch at 1 to 45 (MQKYVCNVCGYEYDPAEHDNVPFDQLPDDWCCPVCGVSKDQFSPA) folds into the Rubredoxin-like domain. Fe cation is bound by residues C6, C9, C32, and C35.

Belongs to the rubredoxin family. Fe(3+) serves as cofactor.

It is found in the cytoplasm. Rubredoxin is a small nonheme, iron protein lacking acid-labile sulfide. Its single Fe, chelated to 4 Cys, functions as an electron acceptor and may also stabilize the conformation of the molecule. Its function is as follows. Electron acceptor for cytoplasmic lactate dehydrogenase. This Desulfovibrio desulfuricans (strain ATCC 27774 / DSM 6949 / MB) protein is Rubredoxin-1 (rd1).